A 239-amino-acid chain; its full sequence is Small ribosomal subunit protein uS2 (239 aa).

It belongs to the universal ribosomal protein uS2 family.

The polypeptide is Small ribosomal subunit protein uS2 (Synechococcus sp. (strain WH7803)).